A 331-amino-acid chain; its full sequence is MMTMNGKQHFSMHPALHPSSEGMRRVCLPAPQLQGNIFSGFDESLLARAEALAAADIVSHGKSHPFKTDVTYHTMSSVPCTSSSSTVPISHPSSNLPSHHHHHLSHQTLEGDLLDHISSSLSVSGMGAPPDPSVMTTQAHQHHLQMGHLHQAMAMGHPHTLSVHNGMACVNDVESDPRELEAFAERFKQRRIKLGVTQADVGSALANLKIPGVGSLSQSTICRFESLTLSHNNMIALKPVLQAWLEEAEAAYREKNGKPDLFNGNERKRKRTSIAAPEKRSLEAYFAIQPRPSSEKIAAIAEKLDLKKNVVRVWFCNQRQKQKRMKYSAVH.

A compositionally biased stretch (low complexity) spans 81–97; it reads TSSSSTVPISHPSSNLP. Residues 81 to 108 are disordered; sequence TSSSSTVPISHPSSNLPSHHHHHLSHQT. One can recognise a POU-specific domain in the interval 172–249; the sequence is DVESDPRELE…VLQAWLEEAE (78 aa). The segment at residues 267–326 is a DNA-binding region (homeobox); the sequence is RKRKRTSIAAPEKRSLEAYFAIQPRPSSEKIAAIAEKLDLKKNVVRVWFCNQRQKQKRMK.

The protein belongs to the POU transcription factor family. Class-4 subfamily. In terms of assembly, interaction with ISL1. As to expression, expressed in the nervous system. Expressed in the otic vesicle during embryogenesis. Expressed in the adult retina in a subset of retinal ganglion cells (RGCs), and at a lower level in the adult tectum. Not expressed in the adult olfactory bulb.

The protein localises to the nucleus. It localises to the cytoplasm. Functionally, acts as a transcriptional activator. Acts by binding to sequences related to the consensus octamer motif 5'-ATGCAAAT-3' in the regulatory regions of its target genes. May play a role in specifying terminally differentiated neuronal phenotypes. The sequence is that of POU domain, class 4, transcription factor 3 (pou4f3) from Danio rerio (Zebrafish).